The sequence spans 118 residues: Acidic phospholipase A2 (118 aa).

Tyr25, Gly27, and Gly29 together coordinate Ca(2+). The active site involves His45. Asp46 contacts Ca(2+). Residue Asp86 is part of the active site.

This sequence belongs to the phospholipase A2 family. Group II subfamily. D49 sub-subfamily. Ca(2+) is required as a cofactor. Six disulfide bonds are present. As to expression, expressed by the venom gland.

It is found in the secreted. The catalysed reaction is a 1,2-diacyl-sn-glycero-3-phosphocholine + H2O = a 1-acyl-sn-glycero-3-phosphocholine + a fatty acid + H(+). Functionally, PLA2 catalyzes the calcium-dependent hydrolysis of the 2-acyl groups in 3-sn-phosphoglycerides. The polypeptide is Acidic phospholipase A2 (Bitis gabonica (Gaboon adder)).